A 287-amino-acid chain; its full sequence is Urease accessory protein UreD (287 aa).

The protein belongs to the UreD family. In terms of assembly, ureD, UreF and UreG form a complex that acts as a GTP-hydrolysis-dependent molecular chaperone, activating the urease apoprotein by helping to assemble the nickel containing metallocenter of UreC. The UreE protein probably delivers the nickel.

The protein resides in the cytoplasm. Functionally, required for maturation of urease via the functional incorporation of the urease nickel metallocenter. In Herpetosiphon aurantiacus (strain ATCC 23779 / DSM 785 / 114-95), this protein is Urease accessory protein UreD.